The primary structure comprises 130 residues: MRPGSSPRAPECGAPALPRPQLDRLPARPAPSRGRGAPSLRWPAKEVGPRPQIPATCEPGKVCGASAGRRDAARPSRPRSSRVTFSTRRQPGPQRGRWGLRGGPESVRGLPHLGLRISGTPLGIFSSWSL.

Residues 1 to 104 (MRPGSSPRAP…RGRWGLRGGP (104 aa)) form a disordered region. The segment covering 88 to 97 (RRQPGPQRGR) has biased composition (low complexity).

This is an uncharacterized protein from Homo sapiens (Human).